Reading from the N-terminus, the 232-residue chain is Translation initiation factor IF-3 (232 aa).

2 disordered regions span residues 1-21 (MAIQ…RTNR) and 184-232 (LQSQ…AAQR). Low complexity predominate over residues 193–208 (AAAAAAPAAAPAAGAP). Pro residues predominate over residues 209–222 (APTPAPAPAAPAPA). Positions 223–232 (PAAADPAAQR) are enriched in low complexity.

Belongs to the IF-3 family. As to quaternary structure, monomer.

Its subcellular location is the cytoplasm. In terms of biological role, IF-3 binds to the 30S ribosomal subunit and shifts the equilibrium between 70S ribosomes and their 50S and 30S subunits in favor of the free subunits, thus enhancing the availability of 30S subunits on which protein synthesis initiation begins. This chain is Translation initiation factor IF-3, found in Anaeromyxobacter sp. (strain K).